The primary structure comprises 827 residues: Centrosomal protein of 95 kDa (827 aa).

Disordered regions lie at residues 115–145 (ISES…ERTE), 183–249 (GDTA…MVPS), 308–372 (FLTS…MSEK), 388–476 (LGDR…DSCH), and 489–558 (ELRK…KASP). The span at 123–145 (SETEQYSKDSHGEEAGEDLERTE) shows a compositional bias: basic and acidic residues. Polar residues predominate over residues 187-199 (HTFSQRSNGAQNS). Composition is skewed to basic and acidic residues over residues 327-343 (EATR…DENR) and 360-372 (PLTE…MSEK). 3 positions are modified to phosphoserine: Ser447, Ser449, and Ser451. Coiled coils occupy residues 584-633 (LTKM…VKKE) and 701-795 (LQIQ…DDDA).

The protein resides in the cytoplasm. The protein localises to the cytoskeleton. It is found in the microtubule organizing center. It localises to the centrosome. Its subcellular location is the spindle pole. The polypeptide is Centrosomal protein of 95 kDa (Cep95) (Mus musculus (Mouse)).